Reading from the N-terminus, the 318-residue chain is Transaldolase (318 aa).

Lysine 132 serves as the catalytic Schiff-base intermediate with substrate.

The protein belongs to the transaldolase family. Type 1 subfamily. As to quaternary structure, homodimer.

The protein resides in the cytoplasm. It carries out the reaction D-sedoheptulose 7-phosphate + D-glyceraldehyde 3-phosphate = D-erythrose 4-phosphate + beta-D-fructose 6-phosphate. Its pathway is carbohydrate degradation; pentose phosphate pathway; D-glyceraldehyde 3-phosphate and beta-D-fructose 6-phosphate from D-ribose 5-phosphate and D-xylulose 5-phosphate (non-oxidative stage): step 2/3. In terms of biological role, transaldolase is important for the balance of metabolites in the pentose-phosphate pathway. The chain is Transaldolase from Shewanella pealeana (strain ATCC 700345 / ANG-SQ1).